The primary structure comprises 135 residues: Large ribosomal subunit protein uL18c (135 aa).

This sequence belongs to the universal ribosomal protein uL18 family. Part of the 50S ribosomal subunit; contacts the 5S rRNA.

The protein localises to the plastid. Its subcellular location is the chloroplast. Binds 5S rRNA, forms part of the central protuberance of the 50S subunit. The sequence is that of Large ribosomal subunit protein uL18c (rpl18) from Phaeodactylum tricornutum (strain CCAP 1055/1).